The following is a 415-amino-acid chain: Stimulator of interferon genes protein (415 aa).

A TIR domain is found at 29–163 (HVYHAFISYC…DIIQAISKPE (135 aa)). E104 is a catalytic residue. Position 256 (R256) interacts with 2',3'-cGAMP. A disordered region spans residues 387-415 (KSPSSTNMVKSEPNIYREESGKTKSVERG). Residues 401 to 415 (IYREESGKTKSVERG) are compositionally biased toward basic and acidic residues.

It in the N-terminal section; belongs to the Toll-like receptor family. The protein in the C-terminal section; belongs to the TMEM173 family. As to quaternary structure, homodimer.

It carries out the reaction NAD(+) + H2O = ADP-D-ribose + nicotinamide + H(+). Sensor of cytosolic DNA from bacteria and viruses that promotes autophagy. Binds c-di-AMP, 2'3'-cGAMP, 3'3'-cGAMP and to a lesser extent c-di-GMP. Nucleotide binding has not been seen to stimulate NAD(+) hydrolase activity. This is Stimulator of interferon genes protein from Magallana gigas (Pacific oyster).